A 114-amino-acid chain; its full sequence is Ribonuclease P protein component (114 aa).

This sequence belongs to the RnpA family. As to quaternary structure, consists of a catalytic RNA component (M1 or rnpB) and a protein subunit.

The enzyme catalyses Endonucleolytic cleavage of RNA, removing 5'-extranucleotides from tRNA precursor.. In terms of biological role, RNaseP catalyzes the removal of the 5'-leader sequence from pre-tRNA to produce the mature 5'-terminus. It can also cleave other RNA substrates such as 4.5S RNA. The protein component plays an auxiliary but essential role in vivo by binding to the 5'-leader sequence and broadening the substrate specificity of the ribozyme. This is Ribonuclease P protein component from Borrelia duttonii (strain Ly).